The chain runs to 554 residues: 2-succinyl-5-enolpyruvyl-6-hydroxy-3-cyclohexene-1-carboxylate synthase (554 aa).

Belongs to the TPP enzyme family. MenD subfamily. As to quaternary structure, homodimer. Requires Mg(2+) as cofactor. The cofactor is Mn(2+). Thiamine diphosphate serves as cofactor.

It catalyses the reaction isochorismate + 2-oxoglutarate + H(+) = 5-enolpyruvoyl-6-hydroxy-2-succinyl-cyclohex-3-ene-1-carboxylate + CO2. The protein operates within quinol/quinone metabolism; 1,4-dihydroxy-2-naphthoate biosynthesis; 1,4-dihydroxy-2-naphthoate from chorismate: step 2/7. Its pathway is quinol/quinone metabolism; menaquinone biosynthesis. In terms of biological role, catalyzes the thiamine diphosphate-dependent decarboxylation of 2-oxoglutarate and the subsequent addition of the resulting succinic semialdehyde-thiamine pyrophosphate anion to isochorismate to yield 2-succinyl-5-enolpyruvyl-6-hydroxy-3-cyclohexene-1-carboxylate (SEPHCHC). The chain is 2-succinyl-5-enolpyruvyl-6-hydroxy-3-cyclohexene-1-carboxylate synthase from Flavobacterium johnsoniae (strain ATCC 17061 / DSM 2064 / JCM 8514 / BCRC 14874 / CCUG 350202 / NBRC 14942 / NCIMB 11054 / UW101) (Cytophaga johnsonae).